Reading from the N-terminus, the 932-residue chain is Glycine dehydrogenase (decarboxylating) (932 aa).

Residue Lys-685 is modified to N6-(pyridoxal phosphate)lysine.

It belongs to the GcvP family. In terms of assembly, the glycine cleavage system is composed of four proteins: P, T, L and H. The cofactor is pyridoxal 5'-phosphate.

The enzyme catalyses N(6)-[(R)-lipoyl]-L-lysyl-[glycine-cleavage complex H protein] + glycine + H(+) = N(6)-[(R)-S(8)-aminomethyldihydrolipoyl]-L-lysyl-[glycine-cleavage complex H protein] + CO2. In terms of biological role, the glycine cleavage system catalyzes the degradation of glycine. The P protein binds the alpha-amino group of glycine through its pyridoxal phosphate cofactor; CO(2) is released and the remaining methylamine moiety is then transferred to the lipoamide cofactor of the H protein. In Brucella melitensis biotype 2 (strain ATCC 23457), this protein is Glycine dehydrogenase (decarboxylating).